We begin with the raw amino-acid sequence, 285 residues long: NADPH-dependent 7-cyano-7-deazaguanine reductase (285 aa).

Position 80–82 (80–82 (VES)) interacts with substrate. 82-83 (SK) lines the NADPH pocket. Cys191 functions as the Thioimide intermediate in the catalytic mechanism. The active-site Proton donor is Asp198. 231-232 (HE) provides a ligand contact to substrate. Position 260-261 (260-261 (RG)) interacts with NADPH.

Belongs to the GTP cyclohydrolase I family. QueF type 2 subfamily. As to quaternary structure, homodimer.

It is found in the cytoplasm. It carries out the reaction 7-aminomethyl-7-carbaguanine + 2 NADP(+) = 7-cyano-7-deazaguanine + 2 NADPH + 3 H(+). Its pathway is tRNA modification; tRNA-queuosine biosynthesis. Functionally, catalyzes the NADPH-dependent reduction of 7-cyano-7-deazaguanine (preQ0) to 7-aminomethyl-7-deazaguanine (preQ1). This Psychrobacter cryohalolentis (strain ATCC BAA-1226 / DSM 17306 / VKM B-2378 / K5) protein is NADPH-dependent 7-cyano-7-deazaguanine reductase.